The sequence spans 244 residues: 3-deoxy-manno-octulosonate cytidylyltransferase (244 aa).

Belongs to the KdsB family.

It localises to the cytoplasm. The catalysed reaction is 3-deoxy-alpha-D-manno-oct-2-ulosonate + CTP = CMP-3-deoxy-beta-D-manno-octulosonate + diphosphate. The protein operates within nucleotide-sugar biosynthesis; CMP-3-deoxy-D-manno-octulosonate biosynthesis; CMP-3-deoxy-D-manno-octulosonate from 3-deoxy-D-manno-octulosonate and CTP: step 1/1. Its pathway is bacterial outer membrane biogenesis; lipopolysaccharide biosynthesis. Functionally, activates KDO (a required 8-carbon sugar) for incorporation into bacterial lipopolysaccharide in Gram-negative bacteria. The protein is 3-deoxy-manno-octulosonate cytidylyltransferase of Rickettsia bellii (strain OSU 85-389).